The primary structure comprises 151 residues: Large ribosomal subunit protein bL9 (151 aa).

Belongs to the bacterial ribosomal protein bL9 family.

In terms of biological role, binds to the 23S rRNA. This chain is Large ribosomal subunit protein bL9, found in Lactobacillus johnsonii (strain CNCM I-12250 / La1 / NCC 533).